The following is a 564-amino-acid chain: Cytochrome P450 monooxygenase fsdH (564 aa).

The helical transmembrane segment at 18 to 38 threads the bilayer; sequence GSVSLAVLSTLAVVIAGWYIL. Residue C472 coordinates heme.

It belongs to the cytochrome P450 family. Heme is required as a cofactor.

It is found in the membrane. Its pathway is mycotoxin biosynthesis. Cytochrome P450 monooxygenase; part of the gene cluster that mediates the biosynthesis of fusaridione A, a bright yellow trans-fused decalin-containing tetramic acid with antimicrobial activity. The PKS module of fsdS catalyzes the formation of the polyketide unit which is then conjugated to L-tyrosine by the condensation domain of the fsdS NRPS module. Activity of the Dieckmann cyclase domain (RED) results in release of the intermediate fusaridione A. The unstable pyrrolidinedione ring of fusaridione A is opened through a reverse-Dieckmann reaction to afford its ring-opened form. The chain is Cytochrome P450 monooxygenase fsdH from Fusarium heterosporum.